Here is a 376-residue protein sequence, read N- to C-terminus: PqqA peptide cyclase (376 aa).

The region spanning 7–222 (VGLPLWLLAE…TNEYRDKLKA (216 aa)) is the Radical SAM core domain. Residues Cys21, Cys25, and Cys28 each contribute to the [4Fe-4S] cluster site.

This sequence belongs to the radical SAM superfamily. PqqE family. In terms of assembly, interacts with PqqD. The interaction is necessary for activity of PqqE. Requires [4Fe-4S] cluster as cofactor.

The enzyme catalyses [PQQ precursor protein] + S-adenosyl-L-methionine = E-Y cross-linked-[PQQ precursor protein] + 5'-deoxyadenosine + L-methionine + H(+). It functions in the pathway cofactor biosynthesis; pyrroloquinoline quinone biosynthesis. Functionally, catalyzes the cross-linking of a glutamate residue and a tyrosine residue in the PqqA protein as part of the biosynthesis of pyrroloquinoline quinone (PQQ). The chain is PqqA peptide cyclase from Pseudomonas putida (strain ATCC 700007 / DSM 6899 / JCM 31910 / BCRC 17059 / LMG 24140 / F1).